A 177-amino-acid polypeptide reads, in one-letter code: Peptide methionine sulfoxide reductase MsrA (177 aa).

C11 is an active-site residue.

It belongs to the MsrA Met sulfoxide reductase family.

It catalyses the reaction L-methionyl-[protein] + [thioredoxin]-disulfide + H2O = L-methionyl-(S)-S-oxide-[protein] + [thioredoxin]-dithiol. It carries out the reaction [thioredoxin]-disulfide + L-methionine + H2O = L-methionine (S)-S-oxide + [thioredoxin]-dithiol. Its function is as follows. Has an important function as a repair enzyme for proteins that have been inactivated by oxidation. Catalyzes the reversible oxidation-reduction of methionine sulfoxide in proteins to methionine. In Trichodesmium erythraeum (strain IMS101), this protein is Peptide methionine sulfoxide reductase MsrA.